Consider the following 1133-residue polypeptide: SH3 and PX domain-containing protein 2A (1133 aa).

One can recognise a PX domain in the interval 4 to 128 (YCVQDATVVD…RFFEARPEDV (125 aa)). The region spanning 166–225 (MILEQYVVVSNYKKQENSELSLQAGEVVDVIEKNESGWWFVSTSEEQGWVPATYLEAQNG) is the SH3 1 domain. Thr256 carries the post-translational modification Phosphothreonine. The region spanning 266–325 (SREEKYVTVQPYTSQSKDEIGFEKGVTVEVIRKNLEGWWYIRYLGKEGWAPASYLKKAKD) is the SH3 2 domain. Residues Ser406 and Ser421 each carry the phosphoserine modification. Disordered stretches follow at residues 415 to 446 (QRAQ…PPEP), 505 to 840 (RKKP…EWEG), 899 to 924 (NEQP…GKSD), and 941 to 964 (QSKK…SGTP). Residues 448 to 507 (SVEVEYYTIAEFQSCISDGISFRGGQKAEVIDKNSGGWWYVQIGEKEGWAPASYIDKRKK) enclose the SH3 3 domain. The segment covering 546-555 (DSPRKLKYEE) has biased composition (basic and acidic residues). Residues Ser547 and Ser567 each carry the phosphoserine modification. The span at 567–576 (SEPELSEEPV) shows a compositional bias: acidic residues. The span at 577 to 586 (EDRASGERRP) shows a compositional bias: basic and acidic residues. A Phosphoserine modification is found at Ser593. Positions 608–620 (SSEDVALEEETIY) are enriched in acidic residues. Low complexity-rich tracts occupy residues 634–652 (SARG…SLSL), 658–670 (PKSG…SLLK), and 686–715 (SSAS…SKTS). Ser644 is modified (phosphoserine). The residue at position 731 (Thr731) is a Phosphothreonine. Residues Ser767, Ser769, and Ser819 each carry the phosphoserine modification. Thr829 carries the post-translational modification Phosphothreonine. The SH3 4 domain maps to 840–899 (GPATSYMTCSAYQKVQDSEISFPAGVEVQVLEKQESGWWYVRFGELEGWAPSHYLVLDEN). Residues 917–946 (RQNEGKSDSLEKIERRVQALNTVNQSKKAT) are a coiled coil. Phosphoserine is present on residues Ser1002, Ser1016, Ser1017, and Ser1038. Residues 1029 to 1059 (KGRLAERAASQGSDSPLLPAQRNSIPVSPVR) form a disordered region. Residues 1072–1133 (NLKDVYVSIA…VPSNYLEKKN (62 aa)) form the SH3 5 domain.

The protein belongs to the SH3PXD2 family. In terms of assembly, interacts (via N-terminus) with CYBA. Interacts with ADAM12, ADAM15 and ADAM19. Interacts with NOXO1. Interacts (via SH3 domains) with NOXA1. Interacts with FASLG. Interacts (via PX domain) with RAB40B (GTP-bound); interaction promotes invadopodia-mediated extracellular matrix degradation. Post-translationally, tyrosine phosphorylated by SRC. Phosphorylation plays a regulatory role in the protein localization. The intramolecular interaction of the PX domain with the third SH3 domain maintains the protein in the cytoplasm and phosphorylation disrupts this interaction, resulting in the redistribution of the protein from cytoplasm to the perimembrane region. Phosphorylated on serine upon DNA damage, probably by ATM or ATR. In terms of tissue distribution, found in several cancer cell lines, particularly invasive breast carcinomas and melanomas.

Its subcellular location is the cytoplasm. The protein localises to the cell projection. It localises to the podosome. Adapter protein involved in invadopodia and podosome formation, extracellular matrix degradation and invasiveness of some cancer cells. Binds matrix metalloproteinases (ADAMs), NADPH oxidases (NOXs) and phosphoinositides. Acts as an organizer protein that allows NOX1- or NOX3-dependent reactive oxygen species (ROS) generation and ROS localization. In association with ADAM12, mediates the neurotoxic effect of amyloid-beta peptide. The sequence is that of SH3 and PX domain-containing protein 2A from Homo sapiens (Human).